The primary structure comprises 348 residues: Dihydroorotase (348 aa).

Positions 17 and 19 each coordinate Zn(2+). Substrate is bound by residues 19–21 and N45; that span reads HLR. K103, H140, and H178 together coordinate Zn(2+). K103 is subject to N6-carboxylysine. H140 is a binding site for substrate. L223 lines the substrate pocket. D251 lines the Zn(2+) pocket. Residue D251 is part of the active site. Substrate-binding residues include H255 and A267.

It belongs to the metallo-dependent hydrolases superfamily. DHOase family. Class II DHOase subfamily. As to quaternary structure, homodimer. Zn(2+) is required as a cofactor.

It catalyses the reaction (S)-dihydroorotate + H2O = N-carbamoyl-L-aspartate + H(+). The protein operates within pyrimidine metabolism; UMP biosynthesis via de novo pathway; (S)-dihydroorotate from bicarbonate: step 3/3. Catalyzes the reversible cyclization of carbamoyl aspartate to dihydroorotate. This Klebsiella pneumoniae (strain 342) protein is Dihydroorotase.